A 121-amino-acid polypeptide reads, in one-letter code: Large ribosomal subunit protein uL18 (121 aa).

Belongs to the universal ribosomal protein uL18 family. Part of the 50S ribosomal subunit; part of the 5S rRNA/L5/L18/L25 subcomplex. Contacts the 5S and 23S rRNAs.

Its function is as follows. This is one of the proteins that bind and probably mediate the attachment of the 5S RNA into the large ribosomal subunit, where it forms part of the central protuberance. This chain is Large ribosomal subunit protein uL18, found in Bordetella avium (strain 197N).